A 420-amino-acid polypeptide reads, in one-letter code: Pre-mRNA-splicing factor RBM22 (420 aa).

Ala-2 bears the N-acetylalanine mark. A phosphoserine mark is found at Ser-4 and Ser-102. Glycyl lysine isopeptide (Lys-Gly) (interchain with G-Cter in SUMO2) cross-links involve residues Lys-139 and Lys-149. The segment at 159 to 186 (RNRPHICSFWVKGECKRGEECPYRHEKP) adopts a C3H1-type zinc-finger fold. At Lys-212 the chain carries N6-acetyllysine. An RRM domain is found at 232–305 (TTLYVGGLGD…RRLNVKWGRS (74 aa)). Residue Lys-290 forms a Glycyl lysine isopeptide (Lys-Gly) (interchain with G-Cter in SUMO2) linkage. Disordered stretches follow at residues 303-343 (GRSQ…AAEE) and 372-420 (APPP…HSSP). Positions 309-318 (RGKEKEKDGT) are enriched in basic and acidic residues.

This sequence belongs to the SLT11 family. As to quaternary structure, component of the pre-catalytic and catalytic spliceosome complexes. Component of the postcatalytic spliceosome P complex. Interacts with PDCD6; the interaction induces translocation of PDCD6 in the cytoplasm. Interacts with PPIL1.

It localises to the nucleus. The protein resides in the cytoplasm. Functionally, required for pre-mRNA splicing as component of the activated spliceosome. Involved in the first step of pre-mRNA splicing. Binds directly to the internal stem-loop (ISL) domain of the U6 snRNA and to the pre-mRNA intron near the 5' splice site during the activation and catalytic phases of the spliceosome cycle. Involved in both translocations of the nuclear SLU7 to the cytoplasm and the cytosolic calcium-binding protein PDCD6 to the nucleus upon cellular stress responses. The sequence is that of Pre-mRNA-splicing factor RBM22 (RBM22) from Bos taurus (Bovine).